Consider the following 268-residue polypeptide: uncharacterized protein (268 aa).

This is an uncharacterized protein from Acanthamoeba polyphaga mimivirus (APMV).